A 125-amino-acid chain; its full sequence is Cu-Zn superoxide dismutase-like protein OPG175 (125 aa).

Cys-52 and Cys-102 are oxidised to a cystine.

Belongs to the Cu-Zn superoxide dismutase family.

The protein localises to the virion. It is found in the host cytoplasm. In terms of biological role, superoxide dismutase-like protein with no enzymatic activity. In Monkeypox virus, this protein is Cu-Zn superoxide dismutase-like protein OPG175 (OPG175).